A 180-amino-acid chain; its full sequence is Large ribosomal subunit protein uL6 (180 aa).

This sequence belongs to the universal ribosomal protein uL6 family. Part of the 50S ribosomal subunit.

Functionally, this protein binds to the 23S rRNA, and is important in its secondary structure. It is located near the subunit interface in the base of the L7/L12 stalk, and near the tRNA binding site of the peptidyltransferase center. The chain is Large ribosomal subunit protein uL6 from Desulforapulum autotrophicum (strain ATCC 43914 / DSM 3382 / VKM B-1955 / HRM2) (Desulfobacterium autotrophicum).